The following is a 302-amino-acid chain: Nucleotide-binding protein Bmul_0520/BMULJ_02739 (302 aa).

8 to 15 serves as a coordination point for ATP; it reads GISGSGKS. 57 to 60 serves as a coordination point for GTP; it reads DARS.

It belongs to the RapZ-like family.

In terms of biological role, displays ATPase and GTPase activities. The chain is Nucleotide-binding protein Bmul_0520/BMULJ_02739 from Burkholderia multivorans (strain ATCC 17616 / 249).